A 445-amino-acid polypeptide reads, in one-letter code: Phosphoglucosamine mutase (445 aa).

The active-site Phosphoserine intermediate is serine 102. Residues serine 102, aspartate 241, aspartate 243, and aspartate 245 each coordinate Mg(2+). Position 102 is a phosphoserine (serine 102).

Belongs to the phosphohexose mutase family. Requires Mg(2+) as cofactor. Post-translationally, activated by phosphorylation.

The enzyme catalyses alpha-D-glucosamine 1-phosphate = D-glucosamine 6-phosphate. In terms of biological role, catalyzes the conversion of glucosamine-6-phosphate to glucosamine-1-phosphate. This is Phosphoglucosamine mutase from Escherichia coli (strain 55989 / EAEC).